The following is a 1451-amino-acid chain: Murinoglobulin-2 (1451 aa).

Positions 1–27 (MWKSRRAQLCLFSVLLAFLPSASSLNG) are cleaved as a signal peptide. 3 disulfides stabilise this stretch: Cys48/Cys86, Cys251/Cys276, and Cys269/Cys288. Asn55 carries N-linked (GlcNAc...) asparagine glycosylation. N-linked (GlcNAc...) asparagine glycans are attached at residues Asn294, Asn313, and Asn500. Cystine bridges form between Cys461–Cys555, Cys587–Cys773, and Cys634–Cys680. Positions 677-734 (PKICFDSAPMSGPRGKFDLAFSSEVSGTLQKGSSKRPQPEEPPREDPPPKDPLAETIR) are bait region. Residues 703–728 (GTLQKGSSKRPQPEEPPREDPPPKDP) are disordered. The span at 713-728 (PQPEEPPREDPPPKDP) shows a compositional bias: basic and acidic residues. Residues Asn749, Asn776, and Asn871 are each glycosylated (N-linked (GlcNAc...) asparagine). 4 disulfides stabilise this stretch: Cys849–Cys885, Cys923–Cys1274, Cys1081–Cys1104, and Cys1298–Cys1444. The isoglutamyl cysteine thioester (Cys-Gln) cross-link spans 974 to 977 (CGEQ). N-linked (GlcNAc...) asparagine glycosylation is present at Asn1401.

It belongs to the protease inhibitor I39 (alpha-2-macroglobulin) family. Monomer. As to expression, plasma.

The protein localises to the secreted. Its function is as follows. A proteinase activates the inhibitor by specific proteolysis in the bait region, which, by an unknown mechanism leads to reaction at the cysteinyl-glutamyl internal thiol ester site and to a conformational change, whereby the proteinase is trapped and/or covalently bound to the inhibitor. While in the tetrameric proteinase inhibitors steric inhibition is sufficiently strong, monomeric forms need a covalent linkage between the activated glutamyl residue of the original thiol ester and a terminal amino group of a lysine or another nucleophilic group on the proteinase, for inhibition to be effective. The chain is Murinoglobulin-2 (Mug2) from Mus musculus (Mouse).